A 351-amino-acid polypeptide reads, in one-letter code: uncharacterized protein (351 aa).

Residues 25 to 67 are disordered; it reads KKAETETLPPANSQPAAPAPEAKPTEAPVAKAEAKPETPAQPV. Low complexity predominate over residues 33-55; sequence PPANSQPAAPAPEAKPTEAPVAK.

This is an uncharacterized protein from Escherichia coli (strain K12).